Here is a 445-residue protein sequence, read N- to C-terminus: GRAM domain-containing protein 2B (445 aa).

Residue methionine 1 is modified to N-acetylmethionine. Positions 1-118 are disordered; that stretch reads MVKKRLSSSD…ERKKSSSSSQ (118 aa). 2 stretches are compositionally biased toward polar residues: residues 18–44 and 56–68; these read PSNS…SSEA and KSPT…SSVE. The segment covering 82-93 has biased composition (low complexity); the sequence is SKSSFDGSSLLS. The segment covering 94 to 112 has biased composition (basic and acidic residues); sequence DKNDCKTESKTDSKTERKK. The GRAM domain maps to 123–190; it reads MHFHKLFLDV…FSVTLIKKTK (68 aa). A compositionally biased stretch (polar residues) spans 233-246; sequence TSVGNSPNPSSAEN. The segment at 233–252 is disordered; sequence TSVGNSPNPSSAENSFRADR. 3 positions are modified to phosphoserine: serine 238, serine 255, and serine 265. The disordered stretch occupies residues 277–331; sequence DLEGYSSSGSQTPESENSRDFHVTESQTVLNVTKGETKPPRTDAHGSRAPDGKAK. The span at 281 to 291 shows a compositional bias: polar residues; sequence YSSSGSQTPES. Residues 311-330 show a composition bias toward basic and acidic residues; sequence GETKPPRTDAHGSRAPDGKA.

The sequence is that of GRAM domain-containing protein 2B (Gramd2b) from Mus musculus (Mouse).